We begin with the raw amino-acid sequence, 467 residues long: Dihydrolipoyl dehydrogenase (467 aa).

FAD is bound by residues glutamate 33 to cysteine 41, lysine 50, and glycine 113. Cysteine 41 and cysteine 46 are joined by a disulfide. NAD(+) is bound by residues glycine 181 to isoleucine 185, glutamate 204, and alanine 269 to phenylalanine 272. The FAD site is built by aspartate 312 and alanine 320. Histidine 446 serves as the catalytic Proton acceptor.

This sequence belongs to the class-I pyridine nucleotide-disulfide oxidoreductase family. Homodimer. Part of the PDH complex, consisting of multiple copies of AceE (E1), DlaT (E2) and Lpd (E3), and of the BCKADH complex, consisting of multiple copies of BkdA/BkdB (E1), BkdC (E2) and Lpd (E3). FAD is required as a cofactor.

The protein localises to the cytoplasm. The enzyme catalyses N(6)-[(R)-dihydrolipoyl]-L-lysyl-[protein] + NAD(+) = N(6)-[(R)-lipoyl]-L-lysyl-[protein] + NADH + H(+). Functionally, lipoamide dehydrogenase is a component of the alpha-ketoacid dehydrogenase complexes. Catalyzes the reoxidation of dihydrolipoyl groups which are covalently attached to the lipoate acyltransferase components (E2) of the complexes. The sequence is that of Dihydrolipoyl dehydrogenase (lpd) from Mycobacterium leprae (strain TN).